Reading from the N-terminus, the 2387-residue chain is Highly reducing polyketide synthase curS1 (2387 aa).

The region spanning aspartate 10–serine 433 is the Ketosynthase family 3 (KS3) domain. Residues cysteine 182, histidine 316, and histidine 356 each act as for beta-ketoacyl synthase activity in the active site. The tract at residues phenylalanine 551 to glycine 891 is malonyl-CoA:ACP transacylase (MAT) domain. Serine 641 (for malonyltransferase activity) is an active-site residue. The interval lysine 940–threonine 1075 is N-terminal hotdog fold. The PKS/mFAS DH domain maps to lysine 940–glutamate 1259. A dehydratase (DH) domain region spans residues isoleucine 942 to aspartate 1256. Histidine 972 acts as the Proton acceptor; for dehydratase activity in catalysis. The tract at residues serine 1103–glutamate 1259 is C-terminal hotdog fold. The Proton donor; for dehydratase activity role is filled by aspartate 1169. Residues glycine 1673–leucine 1987 are enoylreductase (ER) domain. A catalytic ketoreductase (KRc) domain region spans residues serine 2011–aspartate 2191. Residues glutamate 2302–serine 2379 form the Carrier domain. Serine 2339 is subject to O-(pantetheine 4'-phosphoryl)serine.

It functions in the pathway mycotoxin biosynthesis. Its function is as follows. Highly reducing polyketide synthase; part of the gene cluster that mediates the biosynthesis of 10,11-dehydrocurvularin, a prevalent fungal phytotoxin with heat shock response and immune-modulatory activities. The highly reducing polyketide synthase curS1 is responsible for biosynthesis up to the tetraketide stage. The non-reducing polyketide synthase curS2 then conducts four additional chain extension cycles, producing the unreduced part of the nascent octaketide from C-1 to C-8 in 10,11-dehydrocurvularin. This Aspergillus terreus protein is Highly reducing polyketide synthase curS1.